A 192-amino-acid polypeptide reads, in one-letter code: Probable chorismate pyruvate-lyase (192 aa).

Substrate contacts are provided by Arg85, Leu120, and Glu176.

This sequence belongs to the UbiC family.

Its subcellular location is the cytoplasm. The enzyme catalyses chorismate = 4-hydroxybenzoate + pyruvate. It functions in the pathway cofactor biosynthesis; ubiquinone biosynthesis. Removes the pyruvyl group from chorismate, with concomitant aromatization of the ring, to provide 4-hydroxybenzoate (4HB) for the ubiquinone pathway. This is Probable chorismate pyruvate-lyase from Pseudoalteromonas atlantica (strain T6c / ATCC BAA-1087).